We begin with the raw amino-acid sequence, 215 residues long: Disulfide-bond oxidoreductase YfcG (215 aa).

Positions 1 to 87 constitute a GST N-terminal domain; sequence MIDLYFAPTP…YLAEKTGLFL (87 aa). Glutathione-binding positions include asparagine 11, glutamine 38, arginine 40, isoleucine 52, 71 to 72, and arginine 132; that span reads ES. In terms of domain architecture, GST C-terminal spans 90-215; that stretch reads ETRERAATLQ…AQLGDERSDS (126 aa).

The protein belongs to the GST superfamily. Nu-class GSH transferase family. Homodimer.

In terms of biological role, exhibits a very robust glutathione (GSH)-dependent disulfide-bond reductase activity toward the model substrate, 2-hydroxyethyl disulfide; the actual physiological substrates are not known. Also has a low GSH-dependent hydroperoxidase activity toward cumene hydroperoxide, but does not reduce H(2)O(2), tert-butyl hydroperoxide, benzyl peroxide, or lauroyl peroxide. Exhibits little or no GSH transferase activity with most typical electrophilic substrates, and has no detectable transferase activity using glutathionylspermidine (GspSH) as the nucleophilic substrate. Is involved in defense against oxidative stress, probably via its peroxidase activity. This chain is Disulfide-bond oxidoreductase YfcG (yfcG), found in Escherichia coli (strain K12).